The chain runs to 177 residues: MYLVLLIAVILFIIVILMIFLISGLFYPEQEPALPISPPKKKCKTDTDCKDKGHHCVGGICTNMSCLDAIKYDIKDIKLDPNIRSCNYTPKFYKFSNTTADLQSPFGKTRIDDAELYDPHSGEDFCQRLCLDRKDCIGWEFDQYYAKTTGECYFYIDPHPALKSKNDAVLAIARKVS.

The Intravirion segment spans residues Met1–Ile7. The helical transmembrane segment at Ala8–Gly24 threads the bilayer. The Virion surface portion of the chain corresponds to Leu25–Asn166.

It belongs to the asfivirus envelope protein p22 family.

It is found in the virion membrane. It localises to the host cell membrane. The chain is Putative membrane protein 165 from African swine fever virus (isolate Pig/Kenya/KEN-50/1950) (ASFV).